We begin with the raw amino-acid sequence, 119 residues long: Large ribosomal subunit protein uL18 (119 aa).

This sequence belongs to the universal ribosomal protein uL18 family. Part of the 50S ribosomal subunit; part of the 5S rRNA/L5/L18/L25 subcomplex. Contacts the 5S and 23S rRNAs.

This is one of the proteins that bind and probably mediate the attachment of the 5S RNA into the large ribosomal subunit, where it forms part of the central protuberance. This Xanthomonas axonopodis pv. citri (strain 306) protein is Large ribosomal subunit protein uL18.